The chain runs to 387 residues: Chaperone protein DnaJ (387 aa).

Residues 5 to 70 enclose the J domain; sequence DYYEILEVSA…QKRQAYDQFG (66 aa). A CR-type zinc finger spans residues 130–208; it reads GTTVDVRIPT…CRGEGYKHSS (79 aa). Residues Cys-143, Cys-146, Cys-160, Cys-163, Cys-182, Cys-185, Cys-196, and Cys-199 each coordinate Zn(2+). CXXCXGXG motif repeat units lie at residues 143–150, 160–167, 182–189, and 196–203; these read CESCDGSG, CPTCQGIG, CPNCHGTG, and CKTCRGEG.

This sequence belongs to the DnaJ family. In terms of assembly, homodimer. Requires Zn(2+) as cofactor.

It is found in the cytoplasm. Its function is as follows. Participates actively in the response to hyperosmotic and heat shock by preventing the aggregation of stress-denatured proteins and by disaggregating proteins, also in an autonomous, DnaK-independent fashion. Unfolded proteins bind initially to DnaJ; upon interaction with the DnaJ-bound protein, DnaK hydrolyzes its bound ATP, resulting in the formation of a stable complex. GrpE releases ADP from DnaK; ATP binding to DnaK triggers the release of the substrate protein, thus completing the reaction cycle. Several rounds of ATP-dependent interactions between DnaJ, DnaK and GrpE are required for fully efficient folding. Also involved, together with DnaK and GrpE, in the DNA replication of plasmids through activation of initiation proteins. The protein is Chaperone protein DnaJ of Hydrogenovibrio crunogenus (strain DSM 25203 / XCL-2) (Thiomicrospira crunogena).